The following is a 744-amino-acid chain: Leukocyte immunoglobulin-like receptor subfamily B member 3A (744 aa).

An N-terminal signal peptide occupies residues Met-1 to Gly-24. Topologically, residues Ser-25–Lys-543 are extracellular. Ig-like C2-type domains lie at Leu-26–Gly-119, Tyr-121–Gly-221, Leu-223–Gly-316, Tyr-320–Gly-419, and Phe-426–Gly-520. 3 disulfide bridges follow: Cys-49-Cys-98, Cys-144-Cys-197, and Cys-246-Cys-295. Asn-79 carries N-linked (GlcNAc...) asparagine glycosylation. Asn-338 carries an N-linked (GlcNAc...) asparagine glycan. Cys-343 and Cys-395 are joined by a disulfide. Asn-440 carries N-linked (GlcNAc...) asparagine glycosylation. An intrachain disulfide couples Cys-445 to Cys-496. The helical transmembrane segment at Ala-544–Leu-564 threads the bilayer. Over Arg-565–Gln-744 the chain is Cytoplasmic. Basic and acidic residues predominate over residues Phe-572–Glu-584. Disordered stretches follow at residues Phe-572–Tyr-617, Glu-630–Ser-652, and Glu-667–Gln-744. The short motif at Ser-615 to Val-620 is the ITIM motif 1 element. 2 short sequence motifs (ITIM motif) span residues Val-695 to Leu-700 and Ser-725 to Leu-730. Phosphotyrosine; by LYN is present on residues Tyr-697 and Tyr-727.

As to quaternary structure, interacts with LYN, PTPN6/SHP-1 and PTPN11/SHP-2. Phosphorylated on tyrosine residues by LYN. Phosphorylation at Tyr-697 and Tyr-727 is important for interaction with PTPN6/SHP-1 and PTPN11/SHP-2.

Its subcellular location is the cell membrane. Functionally, may act as receptor for class I MHC antigens. Becomes activated upon coligation with immune receptors, such as FCGR2B and the B-cell receptor. Down-regulates antigen-induced B-cell activation by recruiting phosphatases to its immunoreceptor tyrosine-based inhibitor motifs (ITIM). This Rattus norvegicus (Rat) protein is Leukocyte immunoglobulin-like receptor subfamily B member 3A.